A 403-amino-acid chain; its full sequence is Metacaspase-1A (403 aa).

Residues 1–93 (MQHHHHSSYG…PPTDPVAFGH (93 aa)) form a disordered region. Residues 18–31 (GQAYRQQQPYYGQP) show a composition bias toward low complexity. Pro residues predominate over residues 32–55 (SPQPYAQPPPPNYQRPSGYGPPPS). Active-site residues include His-194 and Cys-250.

The protein belongs to the peptidase C14B family.

Functionally, involved in cell death (apoptosis). The polypeptide is Metacaspase-1A (casA) (Aspergillus terreus (strain NIH 2624 / FGSC A1156)).